The primary structure comprises 364 residues: tRNA 2-selenouridine synthase (364 aa).

One can recognise a Rhodanese domain in the interval 14 to 137; that stretch reads LIADTPIIDV…LRQTAIQATI (124 aa). Catalysis depends on Cys97, which acts as the S-selanylcysteine intermediate.

It belongs to the SelU family. In terms of assembly, monomer.

It catalyses the reaction 5-methylaminomethyl-2-thiouridine(34) in tRNA + selenophosphate + (2E)-geranyl diphosphate + H2O + H(+) = 5-methylaminomethyl-2-selenouridine(34) in tRNA + (2E)-thiogeraniol + phosphate + diphosphate. The catalysed reaction is 5-methylaminomethyl-2-thiouridine(34) in tRNA + (2E)-geranyl diphosphate = 5-methylaminomethyl-S-(2E)-geranyl-thiouridine(34) in tRNA + diphosphate. It carries out the reaction 5-methylaminomethyl-S-(2E)-geranyl-thiouridine(34) in tRNA + selenophosphate + H(+) = 5-methylaminomethyl-2-(Se-phospho)selenouridine(34) in tRNA + (2E)-thiogeraniol. The enzyme catalyses 5-methylaminomethyl-2-(Se-phospho)selenouridine(34) in tRNA + H2O = 5-methylaminomethyl-2-selenouridine(34) in tRNA + phosphate. Its function is as follows. Involved in the post-transcriptional modification of the uridine at the wobble position (U34) of tRNA(Lys), tRNA(Glu) and tRNA(Gln). Catalyzes the conversion of 2-thiouridine (S2U-RNA) to 2-selenouridine (Se2U-RNA). Acts in a two-step process involving geranylation of 2-thiouridine (S2U) to S-geranyl-2-thiouridine (geS2U) and subsequent selenation of the latter derivative to 2-selenouridine (Se2U) in the tRNA chain. The sequence is that of tRNA 2-selenouridine synthase from Shigella flexneri serotype 5b (strain 8401).